A 178-amino-acid chain; its full sequence is Protein GrpE (178 aa).

Positions methionine 1–valine 26 are disordered.

Belongs to the GrpE family. Homodimer.

Its subcellular location is the cytoplasm. Its function is as follows. Participates actively in the response to hyperosmotic and heat shock by preventing the aggregation of stress-denatured proteins, in association with DnaK and GrpE. It is the nucleotide exchange factor for DnaK and may function as a thermosensor. Unfolded proteins bind initially to DnaJ; upon interaction with the DnaJ-bound protein, DnaK hydrolyzes its bound ATP, resulting in the formation of a stable complex. GrpE releases ADP from DnaK; ATP binding to DnaK triggers the release of the substrate protein, thus completing the reaction cycle. Several rounds of ATP-dependent interactions between DnaJ, DnaK and GrpE are required for fully efficient folding. This chain is Protein GrpE, found in Herminiimonas arsenicoxydans.